The sequence spans 545 residues: ATP synthase F(1) complex subunit alpha, mitochondrial (545 aa).

ATP contacts are provided by Gln-216, Gly-218, Lys-219, Thr-220, and Ser-221. Residue Thr-220 coordinates Mg(2+). Position 304 (Asp-304) interacts with Mg(2+). ATP is bound by residues Gln-465 and Gln-467.

The protein belongs to the ATPase alpha/beta chains family. As to quaternary structure, homotrimer. Component of the ATP synthase complex composed at least of ATP5F1A/subunit alpha, ATP5F1B/subunit beta, ATP5MC1/subunit c (homooctomer), MT-ATP6/subunit a, MT-ATP8/subunit 8, ATP5ME/subunit e, ATP5MF/subunit f, ATP5MG/subunit g, ATP5MK/subunit k, ATP5MJ/subunit j, ATP5F1C/subunit gamma, ATP5F1D/subunit delta, ATP5F1E/subunit epsilon, ATP5PF/subunit F6, ATP5PB/subunit b, ATP5PD/subunit d, ATP5PO/subunit OSCP. ATP synthase complex consists of a soluble F(1) head domain (subunits alpha(3) and beta(3)) - the catalytic core - and a membrane F(0) domain - the membrane proton channel (subunits c, a, 8, e, f, g, k and j). These two domains are linked by a central stalk (subunits gamma, delta, and epsilon) rotating inside the F1 region and a stationary peripheral stalk (subunits F6, b, d, and OSCP).

It localises to the mitochondrion inner membrane. Functionally, subunit alpha, of the mitochondrial membrane ATP synthase complex (F(1)F(0) ATP synthase or Complex V) that produces ATP from ADP in the presence of a proton gradient across the membrane which is generated by electron transport complexes of the respiratory chain. ATP synthase complex consist of a soluble F(1) head domain - the catalytic core - and a membrane F(1) domain - the membrane proton channel. These two domains are linked by a central stalk rotating inside the F(1) region and a stationary peripheral stalk. During catalysis, ATP synthesis in the catalytic domain of F(1) is coupled via a rotary mechanism of the central stalk subunits to proton translocation. In vivo, can only synthesize ATP although its ATP hydrolase activity can be activated artificially in vitro. With the catalytic subunit beta (ATP5F1B), forms the catalytic core in the F(1) domain. Subunit alpha does not bear the catalytic high-affinity ATP-binding sites. The chain is ATP synthase F(1) complex subunit alpha, mitochondrial from Xenopus laevis (African clawed frog).